The following is a 396-amino-acid chain: Phosphoglycerate kinase (396 aa).

Residues 21 to 23 (DFN), R36, 59 to 62 (HLGK), R119, and R156 contribute to the substrate site. ATP-binding positions include K206, G294, E325, and 352–355 (GGDS).

This sequence belongs to the phosphoglycerate kinase family. In terms of assembly, monomer.

It localises to the cytoplasm. It catalyses the reaction (2R)-3-phosphoglycerate + ATP = (2R)-3-phospho-glyceroyl phosphate + ADP. Its pathway is carbohydrate degradation; glycolysis; pyruvate from D-glyceraldehyde 3-phosphate: step 2/5. This chain is Phosphoglycerate kinase, found in Listeria monocytogenes serovar 1/2a (strain ATCC BAA-679 / EGD-e).